The primary structure comprises 396 residues: Cytochrome b (396 aa).

A run of 4 helical transmembrane segments spans residues 37 to 57 (FGSL…ILAM), 81 to 102 (WLMR…YAHI), 117 to 137 (WNVG…GYVL), and 182 to 202 (FFTF…IHIM). Heme b contacts are provided by His-87 and His-101. Positions 186 and 200 each coordinate heme b. His-205 lines the a ubiquinone pocket. The next 4 membrane-spanning stretches (helical) occupy residues 230–250 (FKDI…SLLP), 292–312 (LGGV…PFTH), 324–344 (LAQV…WLGG), and 351–371 (FILM…LIFP).

Belongs to the cytochrome b family. In terms of assembly, the cytochrome bc1 complex contains 3 respiratory subunits (MT-CYB, CYC1 and UQCRFS1), 2 core proteins (UQCRC1 and UQCRC2) and probably 6 low-molecular weight proteins. Requires heme b as cofactor.

The protein resides in the mitochondrion inner membrane. Functionally, component of the ubiquinol-cytochrome c reductase complex (complex III or cytochrome b-c1 complex) that is part of the mitochondrial respiratory chain. The b-c1 complex mediates electron transfer from ubiquinol to cytochrome c. Contributes to the generation of a proton gradient across the mitochondrial membrane that is then used for ATP synthesis. The chain is Cytochrome b (mt-cyb) from Lampetra fluviatilis (European river lamprey).